The chain runs to 501 residues: MNSESLENLHRPLIESSKSFVDYRLETVLTDRELPYFRRIYLAMMIEMKFLFHLAAPAIFVYVINNGMSILTRIFAGHVGSFELAAASLGNSGFNMFTYGLLLGMGSAVETLCGQAHGAHRYEMLGVYLQRSTVVLILTCLPMSFLFLFSNPILTALGEPEQVATLASVFVYGMIPVIFAYAVNFPIQKFLQSQSIVTPSAYISAATLVIHLILSWIAVYRLGYGLLALSLIHSFSWWIIVVAQIVYIKMSPRCRRTWEGFSWKAFEGLWDFFRLSAASAVMLCLESWYSQILVLLAGLLKNPELALDSLAICMSISAISFMVSVGFNAAASVRVSNELGAGNPRAAAFSTVVTTGVSFLLSVFEAIVVLSWRHVISYAFTDSPAVAEAVADLSPFLAITIVLNGIQPVLSGVAVGCGWQAFVAYVNIGCYYVVGIPVGFVLGFTYDMGAKGIWTGMIGGTLMQTIILVIVTLRTDWDKEVEKASSRLDQWEESREPLLKQ.

Transmembrane regions (helical) follow at residues 44 to 64, 84 to 104, 134 to 154, 163 to 183, 200 to 220, 222 to 242, 280 to 300, 310 to 330, 352 to 372, 396 to 416, 422 to 442, and 453 to 473; these read MMIE…VYVI, LAAA…LLLG, VVLI…NPIL, VATL…AYAV, SAYI…IAVY, LGYG…IIVV, AVML…AGLL, LAIC…FNAA, VVTT…VLSW, FLAI…VAVG, FVAY…GFVL, and IWTG…IVTL.

Belongs to the multi antimicrobial extrusion (MATE) (TC 2.A.66.1) family.

Its subcellular location is the membrane. The sequence is that of Protein DETOXIFICATION 37 from Arabidopsis thaliana (Mouse-ear cress).